Reading from the N-terminus, the 932-residue chain is F-box protein COS111 (932 aa).

The tract at residues 29–63 (VSAKHRPSSTGVYGHDASTVDHASRSNNNLNLTRS) is disordered. Residues 53-63 (RSNNNLNLTRS) show a composition bias toward low complexity. An F-box domain is found at 146–193 (RKEISDLPDEVLRNILSNVKDDQRTLVNCLYVNKAFYNATKPTLYERP). Positions 346 to 358 (LSEGKSSDNGNNG) are enriched in polar residues. 4 disordered regions span residues 346-369 (LSEG…SVSS), 389-450 (TLSG…SNWF), 470-500 (ISSK…TEPF), and 863-893 (SVLP…SNDP). Low complexity-rich tracts occupy residues 395-431 (NNSS…SQID) and 438-447 (TSSKSTSSTS). Residues 876 to 890 (DDTNNGENTIAQPFS) are compositionally biased toward polar residues.

F-box protein probably involved in ubiquitin conjugation pathway. This is F-box protein COS111 (COS111) from Candida glabrata (strain ATCC 2001 / BCRC 20586 / JCM 3761 / NBRC 0622 / NRRL Y-65 / CBS 138) (Yeast).